Here is a 210-residue protein sequence, read N- to C-terminus: Large ribosomal subunit protein uL3 (210 aa).

Over residues 132–144 (GPMKHGSKYHRRP) the composition is skewed to basic residues. The interval 132–152 (GPMKHGSKYHRRPGSAGAKGP) is disordered.

The protein belongs to the universal ribosomal protein uL3 family. In terms of assembly, part of the 50S ribosomal subunit. Forms a cluster with proteins L14 and L19.

In terms of biological role, one of the primary rRNA binding proteins, it binds directly near the 3'-end of the 23S rRNA, where it nucleates assembly of the 50S subunit. The sequence is that of Large ribosomal subunit protein uL3 from Heliobacterium modesticaldum (strain ATCC 51547 / Ice1).